Reading from the N-terminus, the 620-residue chain is Glutathione-regulated potassium-efflux system protein KefC (620 aa).

Topologically, residues Met-1–Ser-3 are periplasmic. A helical membrane pass occupies residues His-4–Val-24. Residue Arg-25 is a topological domain, cytoplasmic. A helical membrane pass occupies residues Leu-26–Leu-46. At Arg-47 to Glu-53 the chain is on the periplasmic side. Residues Ser-54–Leu-74 form a helical membrane-spanning segment. Over Asp-75–Gly-89 the chain is Cytoplasmic. Residues Gly-90–Leu-110 form a helical membrane-spanning segment. The Periplasmic portion of the chain corresponds to Arg-111–Gln-113. The chain crosses the membrane as a helical span at residues Val-114–Met-134. The Cytoplasmic segment spans residues Asn-135–Ala-148. The helical transmembrane segment at Phe-149–Leu-169 threads the bilayer. The Periplasmic segment spans residues Ala-170–Thr-177. The helical transmembrane segment at Leu-178–Leu-198 threads the bilayer. At Gly-199 to Ser-213 the chain is on the cytoplasmic side. A helical membrane pass occupies residues Gly-214–Leu-233. Over Leu-234–Glu-236 the chain is Periplasmic. A helical transmembrane segment spans residues Val-237–Ser-254. Residues Ser-255 to Lys-269 lie on the Cytoplasmic side of the membrane. Residues Gly-270–Val-290 form a helical membrane-spanning segment. Residues Glu-291–Pro-293 are Periplasmic-facing. Residues Leu-294–Val-314 traverse the membrane as a helical segment. Topologically, residues Ala-315–Arg-326 are cytoplasmic. A helical membrane pass occupies residues Trp-327–Gln-347. Residues Met-348–Lys-358 lie on the Periplasmic side of the membrane. The helical transmembrane segment at Ala-359–Thr-379 threads the bilayer. Residues Arg-380 to Ile-620 are Cytoplasmic-facing. Residues Gln-399–Thr-518 enclose the RCK N-terminal domain. Residues Gln-599–Ile-620 form a disordered region.

The protein belongs to the monovalent cation:proton antiporter 2 (CPA2) transporter (TC 2.A.37) family. KefC subfamily. In terms of assembly, homodimer. Interacts with the regulatory subunit KefF.

It is found in the cell inner membrane. Functionally, pore-forming subunit of a potassium efflux system that confers protection against electrophiles. Catalyzes K(+)/H(+) antiport. The protein is Glutathione-regulated potassium-efflux system protein KefC of Salmonella typhimurium (strain LT2 / SGSC1412 / ATCC 700720).